Consider the following 214-residue polypeptide: Probable transaldolase (214 aa).

Residue Lys83 is the Schiff-base intermediate with substrate of the active site.

It belongs to the transaldolase family. Type 3B subfamily.

It localises to the cytoplasm. The catalysed reaction is D-sedoheptulose 7-phosphate + D-glyceraldehyde 3-phosphate = D-erythrose 4-phosphate + beta-D-fructose 6-phosphate. Its pathway is carbohydrate degradation; pentose phosphate pathway; D-glyceraldehyde 3-phosphate and beta-D-fructose 6-phosphate from D-ribose 5-phosphate and D-xylulose 5-phosphate (non-oxidative stage): step 2/3. In terms of biological role, transaldolase is important for the balance of metabolites in the pentose-phosphate pathway. This is Probable transaldolase from Streptococcus equi subsp. equi (strain 4047).